The following is a 313-amino-acid chain: Homeobox protein CDX-2 (313 aa).

S60 is modified (phosphoserine). Positions 113-153 (HAHHHPHHHPHHPAAAPSCASGLLQTLNPGPPGPAATGAAE) are disordered. Residues 114–124 (AHHHPHHHPHH) show a composition bias toward basic residues. Residues 185–215 (KDKYRVVYTDHQRLELEKEFHYSRYITIRRK) form an interaction with DNA region. A DNA-binding region (homeobox) is located at residues 185 to 244 (KDKYRVVYTDHQRLELEKEFHYSRYITIRRKAELAATLGLSERQVKIWFQNRRAKERKIN). Residues 227-241 (RQVKIWFQNRRAKER) form an interaction with 5-mCpG DNA region. A disordered region spans residues 242 to 313 (KINKKKLQQQ…GGVLNPTVTQ (72 aa)). Low complexity-rich tracts occupy residues 249 to 261 (QQQQ…QQLA) and 271 to 300 (QPGS…PGVL). S283 bears the Phosphoserine mark. The 4S motif; modulates transactivation activity and protein stability motif lies at 283 to 295 (SPVSSLQGSVPGS).

It belongs to the Caudal homeobox family. In terms of assembly, can bind DNA as a monomer or homodimer. In terms of processing, ubiquitinated, leading to its degradation by the proteasome. Phosphorylation at Ser-60 reduces transactivation capacity. Phosphorylation at Ser-283 reduces transactivation capacity and also increases ubiquitin-dependent proteasome degradation. Expressed in the intestine.

The protein localises to the nucleus. Functionally, transcription factor which regulates the transcription of multiple genes expressed in the intestinal epithelium. Binds to the promoter of the intestinal sucrase-isomaltase SI and activates SI transcription. Binds to the DNA sequence 5'-ATAAAAACTTAT-3' in the promoter region of VDR and activates VDR transcription. Binds to and activates transcription of LPH. Activates transcription of CLDN2 and intestinal mucin MUC2. Binds to the 5'-AATTTTTTACAACACCT-3' DNA sequence in the promoter region of CA1 and activates CA1 transcription. Important in broad range of functions from early differentiation to maintenance of the intestinal epithelial lining of both the small and large intestine. Binds preferentially to methylated DNA. In Mesocricetus auratus (Golden hamster), this protein is Homeobox protein CDX-2 (CDX2).